Reading from the N-terminus, the 176-residue chain is Ribosome maturation factor RimM (176 aa).

Positions 97–176 (EDEFYWRDLI…QILVDWDPDF (80 aa)) constitute a PRC barrel domain.

This sequence belongs to the RimM family. In terms of assembly, binds ribosomal protein uS19.

Its subcellular location is the cytoplasm. Functionally, an accessory protein needed during the final step in the assembly of 30S ribosomal subunit, possibly for assembly of the head region. Essential for efficient processing of 16S rRNA. May be needed both before and after RbfA during the maturation of 16S rRNA. It has affinity for free ribosomal 30S subunits but not for 70S ribosomes. The protein is Ribosome maturation factor RimM of Shewanella putrefaciens (strain CN-32 / ATCC BAA-453).